Reading from the N-terminus, the 358-residue chain is UDP-N-acetylglucosamine--N-acetylmuramyl-(pentapeptide) pyrophosphoryl-undecaprenol N-acetylglucosamine transferase (358 aa).

Residues 11-13 (TGG), Asn124, Arg164, Ser195, and Gln291 each bind UDP-N-acetyl-alpha-D-glucosamine.

It belongs to the glycosyltransferase 28 family. MurG subfamily.

The protein resides in the cell inner membrane. It catalyses the reaction di-trans,octa-cis-undecaprenyl diphospho-N-acetyl-alpha-D-muramoyl-L-alanyl-D-glutamyl-meso-2,6-diaminopimeloyl-D-alanyl-D-alanine + UDP-N-acetyl-alpha-D-glucosamine = di-trans,octa-cis-undecaprenyl diphospho-[N-acetyl-alpha-D-glucosaminyl-(1-&gt;4)]-N-acetyl-alpha-D-muramoyl-L-alanyl-D-glutamyl-meso-2,6-diaminopimeloyl-D-alanyl-D-alanine + UDP + H(+). The protein operates within cell wall biogenesis; peptidoglycan biosynthesis. In terms of biological role, cell wall formation. Catalyzes the transfer of a GlcNAc subunit on undecaprenyl-pyrophosphoryl-MurNAc-pentapeptide (lipid intermediate I) to form undecaprenyl-pyrophosphoryl-MurNAc-(pentapeptide)GlcNAc (lipid intermediate II). This chain is UDP-N-acetylglucosamine--N-acetylmuramyl-(pentapeptide) pyrophosphoryl-undecaprenol N-acetylglucosamine transferase, found in Leptospira borgpetersenii serovar Hardjo-bovis (strain JB197).